Here is a 213-residue protein sequence, read N- to C-terminus: Thiamine import ATP-binding protein ThiQ (213 aa).

The ABC transporter domain maps to 1 to 212 (MIELNVTFDY…EQGRIVADQL (212 aa)). 31 to 38 (GESGAGKS) provides a ligand contact to ATP.

This sequence belongs to the ABC transporter superfamily. Thiamine importer (TC 3.A.1.19.1) family. In terms of assembly, the complex is composed of two ATP-binding proteins (ThiQ), two transmembrane proteins (ThiP) and a solute-binding protein (ThiB).

Its subcellular location is the cell inner membrane. The catalysed reaction is thiamine(out) + ATP + H2O = thiamine(in) + ADP + phosphate + H(+). Functionally, part of the ABC transporter complex ThiBPQ involved in thiamine import. Responsible for energy coupling to the transport system. This chain is Thiamine import ATP-binding protein ThiQ, found in Haemophilus ducreyi (strain 35000HP / ATCC 700724).